The chain runs to 823 residues: Valine--tRNA ligase (823 aa).

Residues 52-62 carry the 'HIGH' region motif; sequence PTVSGVLHMGH. A 'KMSKS' region motif is present at residues 549 to 553; the sequence is KMSKS. ATP is bound at residue K552.

This sequence belongs to the class-I aminoacyl-tRNA synthetase family. ValS type 2 subfamily. In terms of assembly, monomer.

It localises to the cytoplasm. The enzyme catalyses tRNA(Val) + L-valine + ATP = L-valyl-tRNA(Val) + AMP + diphosphate. In terms of biological role, catalyzes the attachment of valine to tRNA(Val). As ValRS can inadvertently accommodate and process structurally similar amino acids such as threonine, to avoid such errors, it has a 'posttransfer' editing activity that hydrolyzes mischarged Thr-tRNA(Val) in a tRNA-dependent manner. The protein is Valine--tRNA ligase of Anaplasma marginale (strain St. Maries).